Consider the following 138-residue polypeptide: Cysteine desulfuration protein SufE (138 aa).

Cys51 (cysteine persulfide intermediate) is an active-site residue.

Belongs to the SufE family. In terms of assembly, homodimer. Interacts with SufS.

Its subcellular location is the cytoplasm. Its pathway is cofactor biosynthesis; iron-sulfur cluster biosynthesis. In terms of biological role, participates in cysteine desulfuration mediated by SufS. Cysteine desulfuration mobilizes sulfur from L-cysteine to yield L-alanine and constitutes an essential step in sulfur metabolism for biosynthesis of a variety of sulfur-containing biomolecules. Functions as a sulfur acceptor for SufS, by mediating the direct transfer of the sulfur atom from the S-sulfanylcysteine of SufS, an intermediate product of cysteine desulfuration process. The protein is Cysteine desulfuration protein SufE of Salmonella arizonae (strain ATCC BAA-731 / CDC346-86 / RSK2980).